The chain runs to 377 residues: Floricaula/leafy homolog (377 aa).

A compositionally biased stretch (basic and acidic residues) spans 116–126 (RRRLDEEDPRR). The tract at residues 116-190 (RRRLDEEDPR…RKKGQRKVVD (75 aa)) is disordered. Polar residues predominate over residues 131–141 (SGDNNTNTLDA). 3 consecutive DNA-binding regions follow at residues 206–210 (REHPF), 275–282 (NKPKMRHY), and 346–349 (YVPT).

It belongs to the FLO/LFY family. As to expression, in developing inflorescences, leaf primordia and very young leaves.

It localises to the nucleus. In terms of biological role, probable transcription factor. This is Floricaula/leafy homolog (FL) from Populus trichocarpa (Western balsam poplar).